We begin with the raw amino-acid sequence, 443 residues long: MFLAQEIIRKKRNAEALSKEEIQFFVKGITDNSVSEGQIAALGMAVYFNDMTMDERIALTTAMRDSGTVLNWDSLGLNGPVIDKHSTGGVGDVISLMLGPMAAACGGYVPMISGRGLGHTGGTLDKFDAIPGYQTEPSSELFRKVVKEAGVAIIGQTGDLVPADKRFYSIRDNTATVESISLITASILSKKLAAGLDALAMDVKVGSGAFMPTYEASLELARSITAVANGAGTKTTALLTDMNQVLASCAGNALEVKEAVDFLTGKYRNPRLYEVTMGLCAEMLVLGGLAANDADARTKLNTVLDNGRAAEIFGKMVSGLGGPADFVESYDKYLPKASIIRPVYAERDGFAYSMVTRELGLAVVTLGGGRRKPGDALDYSVGLSNVCALGQPINKDTPLAVIHAQSEAAFEEAARAVRGAITVSDKQPEKTPEIYQYVRAEDL.

It belongs to the thymidine/pyrimidine-nucleoside phosphorylase family. As to quaternary structure, homodimer.

It carries out the reaction thymidine + phosphate = 2-deoxy-alpha-D-ribose 1-phosphate + thymine. Its pathway is pyrimidine metabolism; dTMP biosynthesis via salvage pathway; dTMP from thymine: step 1/2. Its function is as follows. The enzymes which catalyze the reversible phosphorolysis of pyrimidine nucleosides are involved in the degradation of these compounds and in their utilization as carbon and energy sources, or in the rescue of pyrimidine bases for nucleotide synthesis. The polypeptide is Thymidine phosphorylase (Shewanella amazonensis (strain ATCC BAA-1098 / SB2B)).